A 275-amino-acid chain; its full sequence is 2,3,4,5-tetrahydropyridine-2,6-dicarboxylate N-succinyltransferase (275 aa).

Substrate-binding residues include arginine 105 and aspartate 142.

The protein belongs to the transferase hexapeptide repeat family. Homotrimer.

The protein localises to the cytoplasm. It carries out the reaction (S)-2,3,4,5-tetrahydrodipicolinate + succinyl-CoA + H2O = (S)-2-succinylamino-6-oxoheptanedioate + CoA. It participates in amino-acid biosynthesis; L-lysine biosynthesis via DAP pathway; LL-2,6-diaminopimelate from (S)-tetrahydrodipicolinate (succinylase route): step 1/3. This Histophilus somni (strain 129Pt) (Haemophilus somnus) protein is 2,3,4,5-tetrahydropyridine-2,6-dicarboxylate N-succinyltransferase.